Consider the following 169-residue polypeptide: Phosphopantetheine adenylyltransferase (169 aa).

Ser-10 contributes to the substrate binding site. ATP contacts are provided by residues 10 to 11 (SF) and His-18. Substrate-binding residues include Lys-42, Thr-79, and Arg-93. ATP-binding positions include 94–96 (GLR), Glu-104, and 129–135 (VRPITAT).

The protein belongs to the bacterial CoaD family. As to quaternary structure, homohexamer. Mg(2+) is required as a cofactor.

It localises to the cytoplasm. It carries out the reaction (R)-4'-phosphopantetheine + ATP + H(+) = 3'-dephospho-CoA + diphosphate. It functions in the pathway cofactor biosynthesis; coenzyme A biosynthesis; CoA from (R)-pantothenate: step 4/5. In terms of biological role, reversibly transfers an adenylyl group from ATP to 4'-phosphopantetheine, yielding dephospho-CoA (dPCoA) and pyrophosphate. The chain is Phosphopantetheine adenylyltransferase from Rhodopseudomonas palustris (strain ATCC BAA-98 / CGA009).